Reading from the N-terminus, the 459-residue chain is DNA polymerase subunit gamma-2 (459 aa).

Heterotrimer composed of a catalytic subunit and a homodimer of accessory subunits (POLG:POLG2).

The protein resides in the mitochondrion. The protein localises to the mitochondrion matrix. It localises to the mitochondrion nucleoid. Its function is as follows. Accessory subunit of DNA polymerase gamma solely responsible for replication of mitochondrial DNA (mtDNA). Acts as an allosteric regulator of the holoenzyme activities. Enhances the polymerase activity and the processivity of POLG by increasing its interactions with the DNA template. Suppresses POLG exonucleolytic proofreading especially toward homopolymeric templates bearing mismatched termini. Binds to single-stranded DNA. This Mus musculus (Mouse) protein is DNA polymerase subunit gamma-2 (Polg2).